Reading from the N-terminus, the 550-residue chain is Calcyphosin-2 (550 aa).

Disordered stretches follow at residues 1-20 (MVPP…DNFS) and 175-198 (ISDP…DSER). The span at 181 to 190 (DLNTKNQESS) shows a compositional bias: polar residues. 3 EF-hand domains span residues 379–414 (RILT…FHLE), 415–452 (VSEQ…EMNE), and 453–488 (YRKS…KKHP). Residues D466, N468, T470, and D477 each coordinate Ca(2+).

In Mus musculus (Mouse), this protein is Calcyphosin-2 (Caps2).